Consider the following 235-residue polypeptide: Large ribosomal subunit protein uL1 (235 aa).

This sequence belongs to the universal ribosomal protein uL1 family. As to quaternary structure, part of the 50S ribosomal subunit.

Binds directly to 23S rRNA. The L1 stalk is quite mobile in the ribosome, and is involved in E site tRNA release. In terms of biological role, protein L1 is also a translational repressor protein, it controls the translation of the L11 operon by binding to its mRNA. This Nitratidesulfovibrio vulgaris (strain ATCC 29579 / DSM 644 / CCUG 34227 / NCIMB 8303 / VKM B-1760 / Hildenborough) (Desulfovibrio vulgaris) protein is Large ribosomal subunit protein uL1.